A 363-amino-acid polypeptide reads, in one-letter code: Chorismate synthase (363 aa).

Positions 44 to 63 are disordered; the sequence is DLDRRKPGTSRHTTQRQEPD. Residues R48 and R54 each contribute to the NADP(+) site. FMN-binding positions include 125–127, 237–238, G277, 292–296, and R318; these read RSS, NA, and KPTSS.

The protein belongs to the chorismate synthase family. In terms of assembly, homotetramer. It depends on FMNH2 as a cofactor.

The enzyme catalyses 5-O-(1-carboxyvinyl)-3-phosphoshikimate = chorismate + phosphate. Its pathway is metabolic intermediate biosynthesis; chorismate biosynthesis; chorismate from D-erythrose 4-phosphate and phosphoenolpyruvate: step 7/7. Functionally, catalyzes the anti-1,4-elimination of the C-3 phosphate and the C-6 proR hydrogen from 5-enolpyruvylshikimate-3-phosphate (EPSP) to yield chorismate, which is the branch point compound that serves as the starting substrate for the three terminal pathways of aromatic amino acid biosynthesis. This reaction introduces a second double bond into the aromatic ring system. The protein is Chorismate synthase of Pseudomonas fluorescens (strain ATCC BAA-477 / NRRL B-23932 / Pf-5).